The primary structure comprises 159 residues: Putative pre-16S rRNA nuclease (159 aa).

It belongs to the YqgF nuclease family.

It localises to the cytoplasm. Could be a nuclease involved in processing of the 5'-end of pre-16S rRNA. This is Putative pre-16S rRNA nuclease from Bartonella henselae (strain ATCC 49882 / DSM 28221 / CCUG 30454 / Houston 1) (Rochalimaea henselae).